Here is a 2196-residue protein sequence, read N- to C-terminus: Genome polyprotein (2196 aa).

The N-myristoyl glycine; by host moiety is linked to residue Gly2. At 2–1506 (GAQVSTQKTG…HVSRAFICLQ (1505 aa)) the chain is on the cytoplasmic side. Positions 568–584 (DLQGDSEHAVESAVSRV) are amphipathic alpha-helix. Residues His883 and Asp901 each act as for protease 2A activity in the active site. Positions 918 and 920 each coordinate Zn(2+). Cys972 (for protease 2A activity) is an active-site residue. Residues Cys978 and His980 each coordinate Zn(2+). Residues 1112 to 1184 (NNGWLKKFTE…EQSAPSQSDQ (73 aa)) form a membrane-binding region. Residues 1112–1250 (NNGWLKKFTE…SPGAGKSVAT (139 aa)) are oligomerization. An RNA-binding region spans residues 1133 to 1137 (AIKIQ). Residues 1216-1372 (EKKMSNYIQF…SMYSQNGKIN (157 aa)) enclose the SF3 helicase domain. Positions 1380, 1392, and 1397 each coordinate Zn(2+). The segment at 1380-1397 (CDEECCPVNFKKCCPLVC) adopts a C4-type; degenerate zinc-finger fold. Residues 1424–1431 (EYNHRHSV) form an RNA-binding region. The segment at 1435-1440 (LEALFQ) is oligomerization. Residues 1507–1522 (ALTTFVSVAGIIYIIY) lie within the membrane without spanning it. The Cytoplasmic portion of the chain corresponds to 1523 to 2196 (KLFAGFQGAY…TLRRKWLDSF (674 aa)). Position 1532 is an O-(5'-phospho-RNA)-tyrosine (Tyr1532). Residues 1552–1730 (GPAFEFAVAM…FSAALLKHYF (179 aa)) enclose the Peptidase C3 domain. Active-site for protease 3C activity residues include His1591, Glu1622, and Cys1698. A RdRp catalytic domain is found at 1961–2077 (GHLIAFDYSG…SYPWPIDASL (117 aa)). 2 residues coordinate Mg(2+): Asp1967 and Asp2063.

Belongs to the picornaviruses polyprotein family. Interacts with capsid protein VP1 and capsid protein VP3 to form heterotrimeric protomers. In terms of assembly, interacts with capsid protein VP0, and capsid protein VP3 to form heterotrimeric protomers. Five protomers subsequently associate to form pentamers which serve as building blocks for the capsid. Interacts with capsid protein VP2, capsid protein VP3 and capsid protein VP4 following cleavage of capsid protein VP0. As to quaternary structure, interacts with capsid protein VP1 and capsid protein VP3 in the mature capsid. Interacts with capsid protein VP0 and capsid protein VP1 to form heterotrimeric protomers. Five protomers subsequently associate to form pentamers which serve as building blocks for the capsid. Interacts with capsid protein VP4 in the mature capsid. Interacts with protein 2C; this interaction may be important for virion morphogenesis. In terms of assembly, interacts with capsid protein VP1 and capsid protein VP3. As to quaternary structure, homodimer. Homohexamer; forms a hexameric ring structure with 6-fold symmetry characteristic of AAA+ ATPases. Interacts (via N-terminus) with host RTN3 (via reticulon domain); this interaction is important for viral replication. Interacts with capsid protein VP3; this interaction may be important for virion morphogenesis. In terms of assembly, interacts with protein 3CD. As to quaternary structure, homodimer. Interacts with host GBF1. Interacts (via GOLD domain) with host ACBD3 (via GOLD domain); this interaction allows the formation of a viral protein 3A/ACBD3 heterotetramer with a 2:2 stoichiometry, which will stimulate the recruitment of host PI4KB in order to synthesize PI4P at the viral RNA replication sites. Interacts with RNA-directed RNA polymerase. In terms of assembly, interacts with protein 3AB and with RNA-directed RNA polymerase. As to quaternary structure, interacts with Viral protein genome-linked and with protein 3CD. The cofactor is Mg(2+). Post-translationally, specific enzymatic cleavages in vivo by the viral proteases yield processing intermediates and the mature proteins. Myristoylation is required for the formation of pentamers during virus assembly. Further assembly of 12 pentamers and a molecule of genomic RNA generates the provirion. In terms of processing, during virion maturation, immature virions are rendered infectious following cleavage of VP0 into VP4 and VP2. This maturation seems to be an autocatalytic event triggered by the presence of RNA in the capsid and it is followed by a conformational change infectious virion. Post-translationally, myristoylation is required during RNA encapsidation and formation of the mature virus particle. VPg is uridylylated by the polymerase into VPg-pUpU. This acts as a nucleotide-peptide primer for the genomic RNA replication.

The protein localises to the virion. Its subcellular location is the host cytoplasm. It is found in the host cytoplasmic vesicle membrane. The protein resides in the host nucleus. It carries out the reaction a ribonucleoside 5'-triphosphate + H2O = a ribonucleoside 5'-diphosphate + phosphate + H(+). The enzyme catalyses Selective cleavage of Tyr-|-Gly bond in the picornavirus polyprotein.. It catalyses the reaction RNA(n) + a ribonucleoside 5'-triphosphate = RNA(n+1) + diphosphate. The catalysed reaction is Selective cleavage of Gln-|-Gly bond in the poliovirus polyprotein. In other picornavirus reactions Glu may be substituted for Gln, and Ser or Thr for Gly.. With respect to regulation, replication or transcription is subject to high level of random mutations by the nucleotide analog ribavirin. Forms an icosahedral capsid of pseudo T=3 symmetry with capsid proteins VP2 and VP3. The capsid is 300 Angstroms in diameter, composed of 60 copies of each capsid protein and enclosing the viral positive strand RNA genome. Capsid protein VP1 mainly forms the vertices of the capsid. Capsid protein VP1 interacts with host cell receptor to provide virion attachment to target host cells. This attachment induces virion internalization. Tyrosine kinases are probably involved in the entry process. After binding to its receptor, the capsid undergoes conformational changes. Capsid protein VP1 N-terminus (that contains an amphipathic alpha-helix) and capsid protein VP4 are externalized. Together, they shape a pore in the host membrane through which viral genome is translocated to host cell cytoplasm. In terms of biological role, forms an icosahedral capsid of pseudo T=3 symmetry with capsid proteins VP2 and VP3. The capsid is 300 Angstroms in diameter, composed of 60 copies of each capsid protein and enclosing the viral positive strand RNA genome. Functionally, lies on the inner surface of the capsid shell. After binding to the host receptor, the capsid undergoes conformational changes. Capsid protein VP4 is released, Capsid protein VP1 N-terminus is externalized, and together, they shape a pore in the host membrane through which the viral genome is translocated into the host cell cytoplasm. Its function is as follows. Component of immature procapsids, which is cleaved into capsid proteins VP4 and VP2 after maturation. Allows the capsid to remain inactive before the maturation step. Cysteine protease that cleaves viral polyprotein and specific host proteins. It is responsible for the autocatalytic cleavage between the P1 and P2 regions, which is the first cleavage occurring in the polyprotein. Also cleaves the host translation initiation factor EIF4G1, in order to shut down the capped cellular mRNA translation. Inhibits the host nucleus-cytoplasm protein and RNA trafficking by cleaving host members of the nuclear pores. Counteracts stress granule formation probably by antagonizing its assembly or promoting its dissassembly. In terms of biological role, plays an essential role in the virus replication cycle by acting as a viroporin. Creates a pore in the host endoplasmic reticulum and as a consequence releases Ca2+ in the cytoplasm of infected cell. In turn, high levels of cytoplasmic calcium may trigger membrane trafficking and transport of viral ER-associated proteins to viroplasms, sites of viral genome replication. Functionally, induces and associates with structural rearrangements of intracellular membranes. Displays RNA-binding, nucleotide binding and NTPase activities. May play a role in virion morphogenesis and viral RNA encapsidation by interacting with the capsid protein VP3. Its function is as follows. Localizes the viral replication complex to the surface of membranous vesicles. Together with protein 3CD binds the Cis-Active RNA Element (CRE) which is involved in RNA synthesis initiation. Acts as a cofactor to stimulate the activity of 3D polymerase, maybe through a nucleid acid chaperone activity. Localizes the viral replication complex to the surface of membranous vesicles. It inhibits host cell endoplasmic reticulum-to-Golgi apparatus transport and causes the disassembly of the Golgi complex, possibly through GBF1 interaction. This would result in depletion of MHC, trail receptors and IFN receptors at the host cell surface. Plays an essential role in viral RNA replication by recruiting ACBD3 and PI4KB at the viral replication sites, thereby allowing the formation of the rearranged membranous structures where viral replication takes place. In terms of biological role, acts as a primer for viral RNA replication and remains covalently bound to viral genomic RNA. VPg is uridylylated prior to priming replication into VPg-pUpU. The oriI viral genomic sequence may act as a template for this. The VPg-pUpU is then used as primer on the genomic RNA poly(A) by the RNA-dependent RNA polymerase to replicate the viral genome. During genome replication, the VPg-RNA linkage is removed by the host TDP2, thereby accelerating replication. During the late stage of the replication cycle, host TDP2 is excluded from sites of viral RNA synthesis and encapsidation, allowing for the generation of progeny virions. Functionally, involved in the viral replication complex and viral polypeptide maturation. It exhibits protease activity with a specificity and catalytic efficiency that is different from protease 3C. Protein 3CD lacks polymerase activity. Protein 3CD binds to the 5'UTR of the viral genome. Its function is as follows. Replicates the viral genomic RNA on the surface of intracellular membranes. May form linear arrays of subunits that propagate along a strong head-to-tail interaction called interface-I. Covalently attaches UMP to a tyrosine of VPg, which is used to prime RNA synthesis. The positive stranded RNA genome is first replicated at virus induced membranous vesicles, creating a dsRNA genomic replication form. This dsRNA is then used as template to synthesize positive stranded RNA genomes. ss(+)RNA genomes are either translated, replicated or encapsidated. Major viral protease that mediates proteolytic processing of the polyprotein. Cleaves host EIF5B, contributing to host translation shutoff. Also cleaves host PABPC1, contributing to host translation shutoff. Cleaves host NLRP1, triggers host N-glycine-mediated degradation of the autoinhibitory NLRP1 N-terminal fragment. In Homo sapiens (Human), this protein is Genome polyprotein.